Reading from the N-terminus, the 406-residue chain is Argininosuccinate synthase (406 aa).

ATP is bound by residues 10-18 (AYSGGLDTS) and A37. The L-citrulline site is built by Y88 and S93. Position 118 (G118) interacts with ATP. L-aspartate contacts are provided by T120, N124, and D125. N124 is an L-citrulline binding site. Residues R128, S179, S188, E264, and Y276 each contribute to the L-citrulline site.

The protein belongs to the argininosuccinate synthase family. Type 1 subfamily. As to quaternary structure, homotetramer.

The protein localises to the cytoplasm. The catalysed reaction is L-citrulline + L-aspartate + ATP = 2-(N(omega)-L-arginino)succinate + AMP + diphosphate + H(+). It functions in the pathway amino-acid biosynthesis; L-arginine biosynthesis; L-arginine from L-ornithine and carbamoyl phosphate: step 2/3. The polypeptide is Argininosuccinate synthase (Dinoroseobacter shibae (strain DSM 16493 / NCIMB 14021 / DFL 12)).